The following is a 439-amino-acid chain: Cysteine--tRNA ligase (439 aa).

Cysteine 26 provides a ligand contact to Zn(2+). The short motif at 28–38 is the 'HIGH' region element; the sequence is PTVYNHVHIGN. Residues cysteine 206, histidine 231, and glutamate 235 each coordinate Zn(2+). The 'KMSKS' region signature appears at 263 to 267; that stretch reads KMSKS. An ATP-binding site is contributed by lysine 266.

Belongs to the class-I aminoacyl-tRNA synthetase family. Monomer. Requires Zn(2+) as cofactor.

Its subcellular location is the cytoplasm. It carries out the reaction tRNA(Cys) + L-cysteine + ATP = L-cysteinyl-tRNA(Cys) + AMP + diphosphate. In Malacoplasma penetrans (strain HF-2) (Mycoplasma penetrans), this protein is Cysteine--tRNA ligase.